Consider the following 338-residue polypeptide: Hydroxyproline O-galactosyltransferase HPGT1 (338 aa).

The Cytoplasmic segment spans residues 1–12 (MARKGSSIRLSS). The chain crosses the membrane as a helical; Signal-anchor for type II membrane protein span at residues 13-32 (SRISTLLLFMFATFASFYVA). Residues 33–338 (GRLWQESQTR…WSSEAICAGV (306 aa)) are Lumenal-facing.

The protein belongs to the glycosyltransferase 31 family. Requires Mn(2+) as cofactor. Expressed in roots, rosette leaves, cauline leaves, stems, flowers and siliques.

The protein resides in the golgi apparatus membrane. The protein operates within protein modification; protein glycosylation. Functionally, possesses hydroxyproline O-galactosyltransferase activity. Transfers galactose from UDP-galactose to hydroxyproline residues in the arabinogalactan proteins (AGPs). Is specific for AGPs containing non-contiguous peptidyl hydroxyproline residues. The addition of galactose onto the peptidyl hydroxyproline residues in AGP core proteins represents the first committed step in arabinogalactan polysaccharide addition. AGP glycans play essential roles in both vegetative and reproductive plant growth. In Arabidopsis thaliana (Mouse-ear cress), this protein is Hydroxyproline O-galactosyltransferase HPGT1.